The sequence spans 385 residues: Gibberellin 20 oxidase 5 (385 aa).

In terms of domain architecture, Fe2OG dioxygenase spans 224–324; sequence DGSGIFRCNY…RRSLVFFSCP (101 aa). The Fe cation site is built by His-249, Asp-251, and His-305. Arg-315 is an active-site residue.

The protein belongs to the iron/ascorbate-dependent oxidoreductase family. GA20OX subfamily. It depends on Fe(2+) as a cofactor. Requires L-ascorbate as cofactor. Expressed in 3-day-old seedlings and siliques. Detected in dry seeds, roots, old leaves and inflorescences.

It carries out the reaction gibberellin A12 + 2 2-oxoglutarate + 3 O2 + H(+) = gibberellin A9 + 2 succinate + 3 CO2 + 2 H2O. The enzyme catalyses gibberellin A53 + 2 2-oxoglutarate + 3 O2 + H(+) = gibberellin A20 + 2 succinate + 3 CO2 + 2 H2O. Its pathway is plant hormone biosynthesis; gibberellin biosynthesis. Its function is as follows. Key oxidase enzyme in the biosynthesis of gibberellin that catalyzes the conversion of GA12 and GA53 to GA9 and GA20 respectively, via a three-step oxidation at C-20 of the GA skeleton. The chain is Gibberellin 20 oxidase 5 (GA20OX5) from Arabidopsis thaliana (Mouse-ear cress).